Consider the following 185-residue polypeptide: Ribosome-recycling factor (185 aa).

Belongs to the RRF family.

The protein resides in the cytoplasm. Its function is as follows. Responsible for the release of ribosomes from messenger RNA at the termination of protein biosynthesis. May increase the efficiency of translation by recycling ribosomes from one round of translation to another. The sequence is that of Ribosome-recycling factor from Streptococcus pyogenes serotype M18 (strain MGAS8232).